Here is a 209-residue protein sequence, read N- to C-terminus: ATP phosphoribosyltransferase (209 aa).

This sequence belongs to the ATP phosphoribosyltransferase family. Short subfamily. In terms of assembly, heteromultimer composed of HisG and HisZ subunits.

The protein localises to the cytoplasm. The catalysed reaction is 1-(5-phospho-beta-D-ribosyl)-ATP + diphosphate = 5-phospho-alpha-D-ribose 1-diphosphate + ATP. Its pathway is amino-acid biosynthesis; L-histidine biosynthesis; L-histidine from 5-phospho-alpha-D-ribose 1-diphosphate: step 1/9. Catalyzes the condensation of ATP and 5-phosphoribose 1-diphosphate to form N'-(5'-phosphoribosyl)-ATP (PR-ATP). Has a crucial role in the pathway because the rate of histidine biosynthesis seems to be controlled primarily by regulation of HisG enzymatic activity. This Sulfurimonas denitrificans (strain ATCC 33889 / DSM 1251) (Thiomicrospira denitrificans (strain ATCC 33889 / DSM 1251)) protein is ATP phosphoribosyltransferase.